A 280-amino-acid polypeptide reads, in one-letter code: 4-hydroxy-3-methylbut-2-enyl diphosphate reductase (280 aa).

Residue Cys-12 coordinates [4Fe-4S] cluster. Residues His-40 and His-72 each contribute to the (2E)-4-hydroxy-3-methylbut-2-enyl diphosphate site. Dimethylallyl diphosphate is bound by residues His-40 and His-72. The isopentenyl diphosphate site is built by His-40 and His-72. Position 94 (Cys-94) interacts with [4Fe-4S] cluster. His-122 lines the (2E)-4-hydroxy-3-methylbut-2-enyl diphosphate pocket. His-122 is a dimethylallyl diphosphate binding site. His-122 contributes to the isopentenyl diphosphate binding site. Glu-124 acts as the Proton donor in catalysis. Thr-160 is a (2E)-4-hydroxy-3-methylbut-2-enyl diphosphate binding site. A [4Fe-4S] cluster-binding site is contributed by Cys-188. The (2E)-4-hydroxy-3-methylbut-2-enyl diphosphate site is built by Ser-216, Asn-218, and Ser-260. Residues Ser-216, Asn-218, and Ser-260 each contribute to the dimethylallyl diphosphate site. Residues Ser-216, Asn-218, and Ser-260 each contribute to the isopentenyl diphosphate site.

This sequence belongs to the IspH family. [4Fe-4S] cluster is required as a cofactor.

It carries out the reaction isopentenyl diphosphate + 2 oxidized [2Fe-2S]-[ferredoxin] + H2O = (2E)-4-hydroxy-3-methylbut-2-enyl diphosphate + 2 reduced [2Fe-2S]-[ferredoxin] + 2 H(+). The enzyme catalyses dimethylallyl diphosphate + 2 oxidized [2Fe-2S]-[ferredoxin] + H2O = (2E)-4-hydroxy-3-methylbut-2-enyl diphosphate + 2 reduced [2Fe-2S]-[ferredoxin] + 2 H(+). Its pathway is isoprenoid biosynthesis; dimethylallyl diphosphate biosynthesis; dimethylallyl diphosphate from (2E)-4-hydroxy-3-methylbutenyl diphosphate: step 1/1. It functions in the pathway isoprenoid biosynthesis; isopentenyl diphosphate biosynthesis via DXP pathway; isopentenyl diphosphate from 1-deoxy-D-xylulose 5-phosphate: step 6/6. Catalyzes the conversion of 1-hydroxy-2-methyl-2-(E)-butenyl 4-diphosphate (HMBPP) into a mixture of isopentenyl diphosphate (IPP) and dimethylallyl diphosphate (DMAPP). Acts in the terminal step of the DOXP/MEP pathway for isoprenoid precursor biosynthesis. In Trichlorobacter lovleyi (strain ATCC BAA-1151 / DSM 17278 / SZ) (Geobacter lovleyi), this protein is 4-hydroxy-3-methylbut-2-enyl diphosphate reductase.